We begin with the raw amino-acid sequence, 63 residues long: MNNAKMWLVVKPTVGIPLFLVACAIASFLVHLMLVLTTGWMGDYYSGSFEAASLVSNATTLLS.

The Cytoplasmic portion of the chain corresponds to 1-14 (MNNAKMWLVVKPTV). Residues 15-35 (GIPLFLVACAIASFLVHLMLV) traverse the membrane as a helical segment. Position 31 (histidine 31) interacts with a bacteriochlorophyll. Residues 36–63 (LTTGWMGDYYSGSFEAASLVSNATTLLS) are Periplasmic-facing.

This sequence belongs to the antenna complex alpha subunit family. As to quaternary structure, the core complex is formed by different alpha and beta chains, binding bacteriochlorophyll molecules, and arranged most probably in tetrameric structures disposed around the reaction center. The non-pigmented gamma chains may constitute additional components.

Its subcellular location is the cell inner membrane. Its function is as follows. Antenna complexes are light-harvesting systems, which transfer the excitation energy to the reaction centers. This chain is Light-harvesting protein B-800/850 alpha chain (pucA), found in Rhodovulum sulfidophilum (Rhodobacter sulfidophilus).